The chain runs to 228 residues: Large ribosomal subunit protein uL3 (228 aa).

Residues 157–176 form a disordered region; it reads CHRHAGGTGMSASPSRTFKG.

This sequence belongs to the universal ribosomal protein uL3 family. As to quaternary structure, part of the 50S ribosomal subunit. Forms a cluster with proteins L14 and L19.

One of the primary rRNA binding proteins, it binds directly near the 3'-end of the 23S rRNA, where it nucleates assembly of the 50S subunit. This chain is Large ribosomal subunit protein uL3, found in Rhodopirellula baltica (strain DSM 10527 / NCIMB 13988 / SH1).